The primary structure comprises 608 residues: UvrABC system protein C (608 aa).

The GIY-YIG domain occupies 15–93 (HQPGVYRMYN…IKQYLPKYNV (79 aa)). One can recognise a UVR domain in the interval 203-238 (RQVIQTLVKQMESASQSLNFEKAAIIRDQIQAMRRV).

Belongs to the UvrC family. As to quaternary structure, interacts with UvrB in an incision complex.

The protein resides in the cytoplasm. In terms of biological role, the UvrABC repair system catalyzes the recognition and processing of DNA lesions. UvrC both incises the 5' and 3' sides of the lesion. The N-terminal half is responsible for the 3' incision and the C-terminal half is responsible for the 5' incision. The protein is UvrABC system protein C of Aliivibrio fischeri (strain ATCC 700601 / ES114) (Vibrio fischeri).